The following is a 442-amino-acid chain: tRNA modification GTPase MnmE (442 aa).

(6S)-5-formyl-5,6,7,8-tetrahydrofolate contacts are provided by Arg-21, Glu-79, and Lys-118. The region spanning 215–365 (GLKIAIVGKP…LENKLSSYCN (151 aa)) is the TrmE-type G domain. GTP is bound by residues 225–230 (NVGKSS), 244–250 (TNEAGTT), and 269–272 (DTAG). Residues Ser-229 and Thr-250 each coordinate Mg(2+). A (6S)-5-formyl-5,6,7,8-tetrahydrofolate-binding site is contributed by Lys-442.

This sequence belongs to the TRAFAC class TrmE-Era-EngA-EngB-Septin-like GTPase superfamily. TrmE GTPase family. As to quaternary structure, homodimer. Heterotetramer of two MnmE and two MnmG subunits. Requires K(+) as cofactor.

The protein resides in the cytoplasm. Its function is as follows. Exhibits a very high intrinsic GTPase hydrolysis rate. Involved in the addition of a carboxymethylaminomethyl (cmnm) group at the wobble position (U34) of certain tRNAs, forming tRNA-cmnm(5)s(2)U34. The polypeptide is tRNA modification GTPase MnmE (Mycoplasma mobile (strain ATCC 43663 / 163K / NCTC 11711) (Mesomycoplasma mobile)).